The sequence spans 110 residues: uncharacterized protein (110 aa).

Residues 86-110 (SEEIDEPVMKKRHRRKGSPHRAPFF) form a disordered region. The segment covering 95–104 (KKRHRRKGSP) has biased composition (basic residues).

This is an uncharacterized protein from Arabidopsis thaliana (Mouse-ear cress).